The primary structure comprises 60 residues: Large ribosomal subunit protein bL32 (60 aa).

A disordered region spans residues 1–44 (MAVQQNKKSRSARDMRRSHDALSENALSVEKTTGEVHLRHHVSP). Basic and acidic residues predominate over residues 11–22 (SARDMRRSHDAL).

This sequence belongs to the bacterial ribosomal protein bL32 family.

The chain is Large ribosomal subunit protein bL32 from Pseudomonas putida (strain W619).